Consider the following 508-residue polypeptide: Probable cytochrome P450 6d5 (508 aa).

A heme-binding site is contributed by cysteine 453.

Belongs to the cytochrome P450 family. The cofactor is heme.

The protein resides in the endoplasmic reticulum membrane. Its subcellular location is the microsome membrane. Its function is as follows. May be involved in the metabolism of insect hormones and in the breakdown of synthetic insecticides. The polypeptide is Probable cytochrome P450 6d5 (Cyp6d5) (Drosophila melanogaster (Fruit fly)).